The primary structure comprises 564 residues: Forkhead transcription factor HCM1 (564 aa).

The segment at 33 to 80 (DEKEMITPPSSTVRKTMKEVNKRPSHPLSPDHSSPIAPSKAKRQRSDT) is disordered. Low complexity predominate over residues 58–67 (HPLSPDHSSP). The segment at residues 108–199 (KKPPYSYATL…KFFKGENRGY (92 aa)) is a DNA-binding region (fork-head). A compositionally biased stretch (acidic residues) spans 224–241 (QVESGEGNDDLPDEEERE). Residues 224-246 (QVESGEGNDDLPDEEEREEAGKF) are disordered. Residue threonine 342 is modified to Phosphothreonine. Positions 401–448 (SKPQSQQSYSNSQLPPPPSSHGSDLLKTPKMRHSDGLEKTPSRLISTP) are disordered. Polar residues predominate over residues 402–413 (KPQSQQSYSNSQ). Residues 432–441 (RHSDGLEKTP) show a composition bias toward basic and acidic residues. A Phosphoserine modification is found at serine 496. Residues 536-564 (SDGNNTTDSNQKHHPYHNHPSNDSGNEKN) are disordered. Positions 554 to 564 (HPSNDSGNEKN) are enriched in polar residues.

Phosphorylated by CDK1.

The protein resides in the cytoplasm. It localises to the nucleus. Functionally, transcription factor regulating the cell cycle specific transcription of a spindle pole body (SPB) calmodulin binding protein SPC110. Required for full induction of SPC110 transcription in late G1. Binds to DNA consensus sequence 5'-[AT]AA[TC]AAACAA[AT]-3'. Dosage dependent suppressor of calmodulin mutants which have specific defects in SPB assembly. In Saccharomyces cerevisiae (strain ATCC 204508 / S288c) (Baker's yeast), this protein is Forkhead transcription factor HCM1 (HCM1).